The chain runs to 690 residues: DNA ligase (690 aa).

NAD(+)-binding positions include 43-47 (DAEYD), 92-93 (SI), and E129. K131 acts as the N6-AMP-lysine intermediate in catalysis. Positions 152, 188, 309, and 333 each coordinate NAD(+). C427, C430, C445, and C451 together coordinate Zn(2+). Positions 610–690 (VTPTPLSGKT…GLKELLDGHS (81 aa)) constitute a BRCT domain.

Belongs to the NAD-dependent DNA ligase family. LigA subfamily. Mg(2+) serves as cofactor. Mn(2+) is required as a cofactor.

The catalysed reaction is NAD(+) + (deoxyribonucleotide)n-3'-hydroxyl + 5'-phospho-(deoxyribonucleotide)m = (deoxyribonucleotide)n+m + AMP + beta-nicotinamide D-nucleotide.. Functionally, DNA ligase that catalyzes the formation of phosphodiester linkages between 5'-phosphoryl and 3'-hydroxyl groups in double-stranded DNA using NAD as a coenzyme and as the energy source for the reaction. It is essential for DNA replication and repair of damaged DNA. This chain is DNA ligase, found in Albidiferax ferrireducens (strain ATCC BAA-621 / DSM 15236 / T118) (Rhodoferax ferrireducens).